The following is a 488-amino-acid chain: Glutamyl-tRNA(Gln) amidotransferase subunit A (488 aa).

Residues K77 and S152 each act as charge relay system in the active site. The Acyl-ester intermediate role is filled by S176.

It belongs to the amidase family. GatA subfamily. Heterotrimer of A, B and C subunits.

It catalyses the reaction L-glutamyl-tRNA(Gln) + L-glutamine + ATP + H2O = L-glutaminyl-tRNA(Gln) + L-glutamate + ADP + phosphate + H(+). Functionally, allows the formation of correctly charged Gln-tRNA(Gln) through the transamidation of misacylated Glu-tRNA(Gln) in organisms which lack glutaminyl-tRNA synthetase. The reaction takes place in the presence of glutamine and ATP through an activated gamma-phospho-Glu-tRNA(Gln). The sequence is that of Glutamyl-tRNA(Gln) amidotransferase subunit A from Streptococcus suis (strain 05ZYH33).